Reading from the N-terminus, the 640-residue chain is Autophagy-related protein 20 (640 aa).

2 stretches are compositionally biased toward polar residues: residues 1–18 (MSDL…SETR) and 126–153 (AETC…PSVS). 2 disordered regions span residues 1 to 63 (MSDL…NNKV) and 126 to 156 (AETC…SNRK). Ser-2 carries the N-acetylserine modification. Residues 140–301 (MNGETSASEE…DFLDPNNHNW (162 aa)) enclose the PX domain. Arg-192, Ser-194, Lys-218, and Arg-267 together coordinate a 1,2-diacyl-sn-glycero-3-phospho-(1D-myo-inositol-3-phosphate). Ser-361 and Ser-363 each carry phosphoserine. 2 coiled-coil regions span residues 475-512 (LQNE…DNEM) and 562-593 (TASI…KVIK).

It belongs to the sorting nexin family. As to quaternary structure, forms a complex with SNX4 and ATG17.

It localises to the endosome membrane. The protein resides in the preautophagosomal structure membrane. Its function is as follows. Required for cytoplasm to vacuole transport (Cvt), pexophagy and mitophagy. Also involved in endoplasmic reticulum-specific autophagic process and is essential for the survival of cells subjected to severe ER stress. Functions in protein retrieval from the endocytic pathway. Required for proper sorting of the v-SNARE protein SNC1. The chain is Autophagy-related protein 20 (ATG20) from Saccharomyces cerevisiae (strain ATCC 204508 / S288c) (Baker's yeast).